A 337-amino-acid polypeptide reads, in one-letter code: Lipoyl synthase (337 aa).

[4Fe-4S] cluster-binding residues include Cys-81, Cys-86, Cys-92, Cys-107, Cys-111, Cys-114, and Ser-323. Residues 93-312 (FSHGTATFMI…EDYGNALGFS (220 aa)) enclose the Radical SAM core domain.

This sequence belongs to the radical SAM superfamily. Lipoyl synthase family. [4Fe-4S] cluster is required as a cofactor.

The protein resides in the cytoplasm. The enzyme catalyses [[Fe-S] cluster scaffold protein carrying a second [4Fe-4S](2+) cluster] + N(6)-octanoyl-L-lysyl-[protein] + 2 oxidized [2Fe-2S]-[ferredoxin] + 2 S-adenosyl-L-methionine + 4 H(+) = [[Fe-S] cluster scaffold protein] + N(6)-[(R)-dihydrolipoyl]-L-lysyl-[protein] + 4 Fe(3+) + 2 hydrogen sulfide + 2 5'-deoxyadenosine + 2 L-methionine + 2 reduced [2Fe-2S]-[ferredoxin]. The protein operates within protein modification; protein lipoylation via endogenous pathway; protein N(6)-(lipoyl)lysine from octanoyl-[acyl-carrier-protein]: step 2/2. Its function is as follows. Catalyzes the radical-mediated insertion of two sulfur atoms into the C-6 and C-8 positions of the octanoyl moiety bound to the lipoyl domains of lipoate-dependent enzymes, thereby converting the octanoylated domains into lipoylated derivatives. This chain is Lipoyl synthase, found in Xanthomonas axonopodis pv. citri (strain 306).